The primary structure comprises 215 residues: Cytidylate kinase (215 aa).

Residue 10-18 participates in ATP binding; the sequence is GPAASGKGT.

The protein belongs to the cytidylate kinase family. Type 1 subfamily.

The protein resides in the cytoplasm. It catalyses the reaction CMP + ATP = CDP + ADP. The catalysed reaction is dCMP + ATP = dCDP + ADP. In Bartonella quintana (strain Toulouse) (Rochalimaea quintana), this protein is Cytidylate kinase.